The chain runs to 865 residues: Nitrogen regulatory protein nrfA (865 aa).

5 disordered regions span residues Met-1 to Gln-75, Arg-115 to Ile-140, Phe-177 to Arg-227, Gly-557 to Ser-605, and Leu-617 to Thr-663. Residues Asp-32–Ser-46 are compositionally biased toward low complexity. 2 stretches are compositionally biased toward basic and acidic residues: residues Arg-115–Gln-126 and Pro-180–Ala-189. Residues Ala-582–Gln-592 show a composition bias toward polar residues. Residues Cys-665 to Cys-689 form a GATA-type zinc finger. A disordered region spans residues Asn-713–Ala-854. 2 stretches are compositionally biased toward polar residues: residues Ser-715 to Thr-724 and Ile-737 to Leu-764. 2 stretches are compositionally biased toward low complexity: residues Pro-771 to Ala-786 and Pro-830 to Ala-844.

Its subcellular location is the nucleus. Major nitrogen regulatory protein. In Penicillium urticae, this protein is Nitrogen regulatory protein nrfA (nrfA).